An 897-amino-acid chain; its full sequence is Valine--tRNA ligase (897 aa).

Positions 46–56 (PNVTGSLHMGH) match the 'HIGH' region motif. The 'KMSKS' region signature appears at 532 to 536 (KMSKT). Position 535 (Lys-535) interacts with ATP. Residues 839-897 (LRRSLEKLDKESGVLAARLDNASYLANAPAELVTESRAKLAEQRAQAAILAEQLARLEN) adopt a coiled-coil conformation.

This sequence belongs to the class-I aminoacyl-tRNA synthetase family. ValS type 1 subfamily. In terms of assembly, monomer.

The protein localises to the cytoplasm. The catalysed reaction is tRNA(Val) + L-valine + ATP = L-valyl-tRNA(Val) + AMP + diphosphate. In terms of biological role, catalyzes the attachment of valine to tRNA(Val). As ValRS can inadvertently accommodate and process structurally similar amino acids such as threonine, to avoid such errors, it has a 'posttransfer' editing activity that hydrolyzes mischarged Thr-tRNA(Val) in a tRNA-dependent manner. The sequence is that of Valine--tRNA ligase from Gloeobacter violaceus (strain ATCC 29082 / PCC 7421).